The sequence spans 137 residues: Large ribosomal subunit protein uL16 (137 aa).

Basic residues predominate over residues 1-19 (MLSPKKVKFRKQQRGRRTG). Positions 1 to 20 (MLSPKKVKFRKQQRGRRTGT) are disordered.

Belongs to the universal ribosomal protein uL16 family. As to quaternary structure, part of the 50S ribosomal subunit.

In terms of biological role, binds 23S rRNA and is also seen to make contacts with the A and possibly P site tRNAs. In Desulfosudis oleivorans (strain DSM 6200 / JCM 39069 / Hxd3) (Desulfococcus oleovorans), this protein is Large ribosomal subunit protein uL16.